We begin with the raw amino-acid sequence, 157 residues long: Small ribosomal subunit protein uS13 (157 aa).

It belongs to the universal ribosomal protein uS13 family. Part of the 30S ribosomal subunit. Forms a loose heterodimer with protein S19. Forms two bridges to the 50S subunit in the 70S ribosome.

In terms of biological role, located at the top of the head of the 30S subunit, it contacts several helices of the 16S rRNA. In the 70S ribosome it contacts the 23S rRNA (bridge B1a) and protein L5 of the 50S subunit (bridge B1b), connecting the 2 subunits; these bridges are implicated in subunit movement. The sequence is that of Small ribosomal subunit protein uS13 from Thermofilum pendens (strain DSM 2475 / Hrk 5).